The primary structure comprises 313 residues: Putative olfactory receptor 2B3 (313 aa).

Over 1 to 25 (MNWENESSPKEFILLGFSDRAWLQM) the chain is Extracellular. Asn5 carries an N-linked (GlcNAc...) asparagine glycan. Residues 26–49 (PLFVVLLISYTITIFGNVSIMMVC) traverse the membrane as a helical segment. At 50–57 (ILDPKLHT) the chain is on the cytoplasmic side. The chain crosses the membrane as a helical span at residues 58–79 (PMYFFLTNLSILDLCYTTTTVP). Residues 80–100 (HMLVNIGCNKKTISYAGCVAH) lie on the Extracellular side of the membrane. Cys97 and Cys189 are disulfide-bonded. A helical transmembrane segment spans residues 101-120 (LIIFLALGATECLLLAVMSF). At 121–139 (DRYVAVCRPLHYVVIMNYW) the chain is on the cytoplasmic side. A helical transmembrane segment spans residues 140–158 (FCLRMAAFSWLIGFGNSVL). The Extracellular segment spans residues 159–195 (QSSLTLNMPRCGHQEVDHFFCEVPALLKLSCADTKPI). The helical transmembrane segment at 196-219 (EAELFFFSVLILLIPVTLILISYG) threads the bilayer. The Cytoplasmic portion of the chain corresponds to 220 to 236 (FIAQAVLKIRSAEGRQK). A helical membrane pass occupies residues 237-259 (AFGTCGSHMIVVSLFYGTAIYMY). The Extracellular segment spans residues 260–272 (LQPPSSTSKDWGK). A helical transmembrane segment spans residues 273–292 (MVSLFYGIITSMLNSLIYSL). The Cytoplasmic segment spans residues 293–313 (RNKDMKEAFKRLMPRIFFCKK).

The protein belongs to the G-protein coupled receptor 1 family.

It localises to the cell membrane. Functionally, odorant receptor. The chain is Putative olfactory receptor 2B3 (OR2B3) from Homo sapiens (Human).